The following is a 236-amino-acid chain: Probable glutathione S-transferase BZ2 (236 aa).

The GST N-terminal domain maps to 1–80 (MRVLGGEVSP…YIEDVARESG (80 aa)). Glutathione is bound by residues Ser-9, Lys-37, Ile-51, and 64-65 (ES). The GST C-terminal domain maps to 92–221 (DPYERAMHRF…LPDTEKVVQF (130 aa)).

It belongs to the GST superfamily. HSP26 family.

It carries out the reaction RX + glutathione = an S-substituted glutathione + a halide anion + H(+). The protein operates within pigment biosynthesis; anthocyanin biosynthesis. This is Probable glutathione S-transferase BZ2 (BZ2) from Zea mays (Maize).